A 116-amino-acid chain; its full sequence is Flagellar hook-basal body complex protein FliE (116 aa).

The protein belongs to the FliE family.

The protein localises to the bacterial flagellum basal body. This Rhizobium rhizogenes (strain K84 / ATCC BAA-868) (Agrobacterium radiobacter) protein is Flagellar hook-basal body complex protein FliE.